We begin with the raw amino-acid sequence, 89 residues long: UPF0297 protein SMU_2079c (89 aa).

The protein belongs to the UPF0297 family.

The polypeptide is UPF0297 protein SMU_2079c (Streptococcus mutans serotype c (strain ATCC 700610 / UA159)).